We begin with the raw amino-acid sequence, 874 residues long: Alanine--tRNA ligase (874 aa).

Positions 559, 563, 661, and 665 each coordinate Zn(2+).

It belongs to the class-II aminoacyl-tRNA synthetase family. The cofactor is Zn(2+).

It localises to the cytoplasm. The enzyme catalyses tRNA(Ala) + L-alanine + ATP = L-alanyl-tRNA(Ala) + AMP + diphosphate. In terms of biological role, catalyzes the attachment of alanine to tRNA(Ala) in a two-step reaction: alanine is first activated by ATP to form Ala-AMP and then transferred to the acceptor end of tRNA(Ala). Also edits incorrectly charged Ser-tRNA(Ala) and Gly-tRNA(Ala) via its editing domain. This Microcystis aeruginosa (strain NIES-843 / IAM M-2473) protein is Alanine--tRNA ligase.